The following is a 176-amino-acid chain: Large ribosomal subunit protein uL6 (176 aa).

It belongs to the universal ribosomal protein uL6 family. In terms of assembly, part of the 50S ribosomal subunit.

This protein binds to the 23S rRNA, and is important in its secondary structure. It is located near the subunit interface in the base of the L7/L12 stalk, and near the tRNA binding site of the peptidyltransferase center. The protein is Large ribosomal subunit protein uL6 of Burkholderia thailandensis (strain ATCC 700388 / DSM 13276 / CCUG 48851 / CIP 106301 / E264).